The primary structure comprises 328 residues: MAKPAKRVAVTGAAGQIAYSLLFRIANGDLLGKDQPVILQLLDLPQAQGAVKGVVMELDDCAFPLLAGVVITDDPKVAFKDADVALLVGARPRSKGMERKDLLSANAEIFTVQGAALNEVASRDVKVLVVGNPANTNAYIAMKSAPDLPKKNFTAMLRLDHNRALSQLAAKSGKPVASIEKLAVWGNHSPTMYPDFRFATAEGESLLKLINDDVWNRDTFIPTVGKRGAAIIEARGLSSAASAANAAIDHVRDWVLGTNGKWVTMGIPSDGSYGIPEDIIYGVPVTCENGEYKRVEGLEIDAFSREKMDGTLAELLEERDGVAHLLKN.

12 to 18 (GAAGQIA) lines the NAD(+) pocket. 2 residues coordinate substrate: arginine 93 and arginine 99. NAD(+) contacts are provided by residues asparagine 106, glutamine 113, and 130–132 (VGN). Substrate contacts are provided by asparagine 132 and arginine 163. Histidine 188 acts as the Proton acceptor in catalysis.

The protein belongs to the LDH/MDH superfamily. MDH type 2 family.

It catalyses the reaction (S)-malate + NAD(+) = oxaloacetate + NADH + H(+). Its function is as follows. Catalyzes the reversible oxidation of malate to oxaloacetate. In Burkholderia cenocepacia (strain HI2424), this protein is Malate dehydrogenase.